A 174-amino-acid chain; its full sequence is Keratin-associated protein 1-5 (174 aa).

The 15 X 5 AA repeats of C-C-[QEPVRC]-[TPIVLE]-[SRHVP] stretch occupies residues 3–172 (CCQTSFCGYP…CCRPVCCCEP (170 aa)).

It belongs to the KRTAP type 1 family. As to quaternary structure, interacts with hair keratins. In terms of tissue distribution, expressed in the middle/upper portions of the hair cortex, in the region termed the keratogenous zone.

In terms of biological role, in the hair cortex, hair keratin intermediate filaments are embedded in an interfilamentous matrix, consisting of hair keratin-associated proteins (KRTAP), which are essential for the formation of a rigid and resistant hair shaft through their extensive disulfide bond cross-linking with abundant cysteine residues of hair keratins. The matrix proteins include the high-sulfur and high-glycine-tyrosine keratins. The protein is Keratin-associated protein 1-5 (KRTAP1-5) of Homo sapiens (Human).